The following is a 734-amino-acid chain: Photosystem I P700 chlorophyll a apoprotein A2 (734 aa).

8 helical membrane-spanning segments follow: residues 46–69, 135–158, 175–199, 273–291, 330–353, 369–395, 417–439, and 517–535; these read IFASHFGHLAIIFLWTSGNLFHVA, LYSGSIFLLILASVMLFAGWLHLQ, LNHHLSGLFGFSSVAWSGHLIHVAI, IAHHHLAIGVIFIFAGHMY, LHFQLGLALASLGVITSLVAQHMY, AALYTHHQYIAGFLMVGAFAHGAIFFV, AIISHLSWVSLFLGFHTLGLYVH, and FLVHHAIALALHTTTLILV. [4Fe-4S] cluster contacts are provided by Cys559 and Cys568. 2 helical membrane passes run 575–596 and 643–665; these read AFYLSMFWMLNTIGWVTFYWHW and LSVWAWMFLFGHLIWATGFMFLI. 3 residues coordinate chlorophyll a: His654, Met662, and Tyr670. Trp671 is a phylloquinone binding site. Residues 707–727 traverse the membrane as a helical segment; the sequence is LVGLVHFTVGYIFTYAAFVIA.

It belongs to the PsaA/PsaB family. The PsaA/B heterodimer binds the P700 chlorophyll special pair and subsequent electron acceptors. PSI consists of a core antenna complex that captures photons, and an electron transfer chain that converts photonic excitation into a charge separation. The eukaryotic PSI reaction center is composed of at least 11 subunits. Requires P700 is a chlorophyll a/chlorophyll a' dimer, A0 is one or more chlorophyll a, A1 is one or both phylloquinones and FX is a shared 4Fe-4S iron-sulfur center. as cofactor.

The protein localises to the plastid. It localises to the chloroplast thylakoid membrane. The enzyme catalyses reduced [plastocyanin] + hnu + oxidized [2Fe-2S]-[ferredoxin] = oxidized [plastocyanin] + reduced [2Fe-2S]-[ferredoxin]. PsaA and PsaB bind P700, the primary electron donor of photosystem I (PSI), as well as the electron acceptors A0, A1 and FX. PSI is a plastocyanin/cytochrome c6-ferredoxin oxidoreductase, converting photonic excitation into a charge separation, which transfers an electron from the donor P700 chlorophyll pair to the spectroscopically characterized acceptors A0, A1, FX, FA and FB in turn. Oxidized P700 is reduced on the lumenal side of the thylakoid membrane by plastocyanin or cytochrome c6. The sequence is that of Photosystem I P700 chlorophyll a apoprotein A2 from Guillardia theta (Cryptophyte).